The chain runs to 323 residues: Polycomb complex protein BMI-1-B (323 aa).

The RING-type zinc finger occupies 18-57 (CVLCGGYFIDAATIIECLHSFCKTCIVRYLETSKYCPICD). A Nuclear localization signal motif is present at residues 81 to 95 (KLVPGLFKGEMKRRR). Residues 238–310 (PHTDRINNTS…HQNPFANRAR (73 aa)) form a disordered region. The span at 287 to 301 (HISSTINGTNSSSSH) shows a compositional bias: low complexity.

Component of a PRC1-like complex. Interacts with cbx4.

It localises to the nucleus. Functionally, component of a Polycomb group (PcG) multiprotein PRC1-like complex, a complex class required to maintain the transcriptionally repressive state of many genes, including Hox genes, throughout development. PcG PRC1 complex acts via chromatin remodeling and modification of histones; it mediates monoubiquitination of histone H2A 'Lys-119', rendering chromatin heritably changed in its expressibility. In the PRC1 complex, it is required to stimulate the E3 ubiquitin-protein ligase activity of rnf2. The protein is Polycomb complex protein BMI-1-B (bmi1b) of Xenopus laevis (African clawed frog).